The primary structure comprises 41 residues: Photosystem II reaction center protein L (41 aa).

Residues 20–40 (SLYLGLLLVFVVGILFSSYFF) form a helical membrane-spanning segment.

It belongs to the PsbL family. As to quaternary structure, PSII is composed of 1 copy each of membrane proteins PsbA, PsbB, PsbC, PsbD, PsbE, PsbF, PsbH, PsbI, PsbJ, PsbK, PsbL, PsbM, PsbT, PsbX, PsbY, PsbZ, Psb30/Ycf12, peripheral proteins PsbO, CyanoQ (PsbQ), PsbU, PsbV and a large number of cofactors. It forms dimeric complexes.

It is found in the cellular thylakoid membrane. In terms of biological role, one of the components of the core complex of photosystem II (PSII). PSII is a light-driven water:plastoquinone oxidoreductase that uses light energy to abstract electrons from H(2)O, generating O(2) and a proton gradient subsequently used for ATP formation. It consists of a core antenna complex that captures photons, and an electron transfer chain that converts photonic excitation into a charge separation. This subunit is found at the monomer-monomer interface and is required for correct PSII assembly and/or dimerization. This chain is Photosystem II reaction center protein L, found in Trichodesmium erythraeum (strain IMS101).